Here is a 257-residue protein sequence, read N- to C-terminus: AT-hook motif nuclear-localized protein 16 (257 aa).

The segment at 1–71 is disordered; sequence MAGGTALTPT…SKNKPKPPII (71 aa). The a.T hook DNA-binding region spans 53–65; that stretch reads KRPRGRPAGSKNK. Residues 77–214 enclose the PPC domain; it reads PNSLRANAVE…DEAASMQNQQ (138 aa).

Interacts with FVE/MSI4 and MSI5 which are components of HDAC corepressor complexes. Preferentially expressed in the inflorescence meristem and young floral buds, as well as in seedling-stage vegetative meristems. Widely expressed in flowers, roots and stems, with relatively low expression in leaves.

It is found in the nucleus. Its function is as follows. Transcription factor that specifically binds AT-rich DNA sequences related to the nuclear matrix attachment regions (MARs). Encodes a nuclear matrix protein that acts in the maintenance of genomic integrity by silencing TEs and repeat-containing genes through epigenetic machinery. Acts as a chromatin remodeling factor that modifies the architecture of FLC and FWA chromatin by modulating both H3 acetylation and methylation leading to the regulation of FLC and FWA expression. Negatively regulates floral repressors including MAF4 and MAF5. Plays a transcription activation role in anther development. Regulates the expression of arabinogalactan proteins (AGPs) involved in the formation of the nexine layer of the pollen wall. Binds AGP6, AGP11, AGP23 and AGP40 promoters. The chain is AT-hook motif nuclear-localized protein 16 from Arabidopsis thaliana (Mouse-ear cress).